A 560-amino-acid polypeptide reads, in one-letter code: MFS siderochrome iron transporter 1 (560 aa).

The N-linked (GlcNAc...) asparagine glycan is linked to Asn-29. Transmembrane regions (helical) follow at residues 53–73 (LWLT…LVSV), 90–110 (LLAS…LTLA), 115–135 (VWGR…ALIM), 146–166 (VAAH…VDVM), 177–194 (MIMF…TFAG), 211–231 (FGAF…IMLF), 264–284 (VVGI…FSIV), 291–311 (WATG…AIFL), 331–351 (PTII…LLTI), 354–374 (AGYV…GIGL), and 379–399 (FKWA…LLIP). N-linked (GlcNAc...) asparagine glycosylation is present at Asn-404. The next 3 membrane-spanning stretches (helical) occupy residues 407-427 (IGAV…FSVC), 441-461 (VAVV…VGLA), and 522-542 (VIAG…WRNV).

The protein belongs to the major facilitator superfamily.

The protein resides in the membrane. In terms of biological role, major facilitator transporter involved in siderophore transport. This chain is MFS siderochrome iron transporter 1, found in Ajellomyces capsulatus (Darling's disease fungus).